A 387-amino-acid polypeptide reads, in one-letter code: Ferrochelatase (387 aa).

H196 and E277 together coordinate Fe cation.

Belongs to the ferrochelatase family.

The protein resides in the cytoplasm. The catalysed reaction is heme b + 2 H(+) = protoporphyrin IX + Fe(2+). It participates in porphyrin-containing compound metabolism; protoheme biosynthesis; protoheme from protoporphyrin-IX: step 1/1. Functionally, catalyzes the ferrous insertion into protoporphyrin IX. In Trichodesmium erythraeum (strain IMS101), this protein is Ferrochelatase.